The primary structure comprises 152 residues: Globin CTT-E/E' (152 aa).

An N-terminal signal peptide occupies residues 1–15 (MKFIILALCVAAASA). The 137-residue stretch at 16–152 (LSGDQIGLVQ…AFFGAVFAKM (137 aa)) folds into the Globin domain. Heme b-binding residues include histidine 73 and histidine 102.

This sequence belongs to the globin family.

The chain is Globin CTT-E/E' (CTT-E) from Chironomus thummi thummi (Midge).